Reading from the N-terminus, the 506-residue chain is Galactose/methyl galactoside import ATP-binding protein MglA (506 aa).

ABC transporter domains follow at residues 14 to 249 (LEMS…VGRS) and 264 to 506 (VILE…SLHL). 46 to 53 (GENGAGKS) contacts ATP.

The protein belongs to the ABC transporter superfamily. Galactose/methyl galactoside importer (TC 3.A.1.2.3) family. As to quaternary structure, the complex is composed of one ATP-binding protein (MglA), two transmembrane proteins (MglC) and a solute-binding protein (MglB).

It localises to the cell inner membrane. It carries out the reaction D-galactose(out) + ATP + H2O = D-galactose(in) + ADP + phosphate + H(+). The catalysed reaction is methyl beta-D-galactoside(out) + ATP + H2O = methyl beta-D-galactoside(in) + ADP + phosphate + H(+). Part of the ABC transporter complex MglABC involved in galactose/methyl galactoside import. Responsible for energy coupling to the transport system. The sequence is that of Galactose/methyl galactoside import ATP-binding protein MglA from Escherichia coli O6:K15:H31 (strain 536 / UPEC).